Consider the following 256-residue polypeptide: MLAKRIIPCLDVTNGRVVKGVNFVELRDAGDPVEIARRYDEQGADEITFLDITATSDGRDLILHIIEAVASQVFIPLTVGGGVRTVEDVRRLLNAGADKISVNSSAIANPQLVSDATGKYGSQCIVVAIDAKRSSAPGEPPRWEVFTHGGRKATGLDAVEWAREMARRGAGEILLTSMDRDGTKSGFDLELTRAVSDAVPVPVIASGGVGGLQDLADGIRLGHADAVLAASIFHYGEHTVGEAKAFMAREGIPVRM.

Residues Asp-11 and Asp-130 contribute to the active site.

This sequence belongs to the HisA/HisF family. As to quaternary structure, heterodimer of HisH and HisF.

It is found in the cytoplasm. The catalysed reaction is 5-[(5-phospho-1-deoxy-D-ribulos-1-ylimino)methylamino]-1-(5-phospho-beta-D-ribosyl)imidazole-4-carboxamide + L-glutamine = D-erythro-1-(imidazol-4-yl)glycerol 3-phosphate + 5-amino-1-(5-phospho-beta-D-ribosyl)imidazole-4-carboxamide + L-glutamate + H(+). Its pathway is amino-acid biosynthesis; L-histidine biosynthesis; L-histidine from 5-phospho-alpha-D-ribose 1-diphosphate: step 5/9. Functionally, IGPS catalyzes the conversion of PRFAR and glutamine to IGP, AICAR and glutamate. The HisF subunit catalyzes the cyclization activity that produces IGP and AICAR from PRFAR using the ammonia provided by the HisH subunit. This Cupriavidus metallidurans (strain ATCC 43123 / DSM 2839 / NBRC 102507 / CH34) (Ralstonia metallidurans) protein is Imidazole glycerol phosphate synthase subunit HisF.